The sequence spans 260 residues: Repetitive secreted protein 1 (260 aa).

An N-terminal signal peptide occupies residues 1–20 (MKLSFTIVATAALVASCTFA).

Post-translationally, rsp1 is processed by the subtilisin-like endoprotease kex2. Cleavage by kex2 generates 11 peptides.

Its subcellular location is the secreted. Functionally, repetitive secreted protein essential for pathogenic development. Hum3 and rsp1 together are pathogenicity proteins that share an essential function in early stages of the infection. The chain is Repetitive secreted protein 1 from Mycosarcoma maydis (Corn smut fungus).